A 119-amino-acid chain; its full sequence is Methylglyoxal synthase (119 aa).

In terms of domain architecture, MGS-like spans 1-119 (MRIALIAHDK…GTADLIIKQF (119 aa)). Residues H8, K12, 34 to 37 (TGTT), and 54 to 55 (SG) each bind substrate. The active-site Proton donor/acceptor is D60. H87 provides a ligand contact to substrate.

The protein belongs to the methylglyoxal synthase family.

The enzyme catalyses dihydroxyacetone phosphate = methylglyoxal + phosphate. Functionally, catalyzes the formation of methylglyoxal from dihydroxyacetone phosphate. The polypeptide is Methylglyoxal synthase (Clostridium botulinum (strain Eklund 17B / Type B)).